The chain runs to 368 residues: Cystathionine beta-lyase (368 aa).

Residue Lys-221 is modified to N6-(pyridoxal phosphate)lysine.

Belongs to the class-II pyridoxal-phosphate-dependent aminotransferase family. MalY/PatB cystathionine beta-lyase subfamily. Pyridoxal 5'-phosphate serves as cofactor.

It catalyses the reaction L,L-cystathionine + H2O = L-homocysteine + pyruvate + NH4(+). It carries out the reaction an S-substituted L-cysteine + H2O = a thiol + pyruvate + NH4(+). It participates in amino-acid biosynthesis; L-methionine biosynthesis via de novo pathway; L-homocysteine from L-cystathionine: step 1/1. Its function is as follows. Catalyzes the transformation of cystathionine to homocysteine. This is Cystathionine beta-lyase (metC) from Corynebacterium glutamicum (Brevibacterium saccharolyticum).